Reading from the N-terminus, the 241-residue chain is MAVATGTVVAVVPAAGAGKRLAAGIPKAFCELDGRTLVERAVVGLLESGVVDHVVVAVPADRIAQTQWVLSQRLANSAGQHATVVAGGADRTKSVCQALATLPAPSRVGAPEFILVHDAARALTPARLIVRVVDALRAGHTAVVPALPLSDTIKAVDANGMVLGTPARVGLRAVQTPQGFATELLWCAYQRGPHLDAVDFTDDASLVEHLGGQVQVVAGDPLAFKITTQLDLLLAKKILRR.

It belongs to the IspD/TarI cytidylyltransferase family. IspD subfamily.

It carries out the reaction 2-C-methyl-D-erythritol 4-phosphate + CTP + H(+) = 4-CDP-2-C-methyl-D-erythritol + diphosphate. The protein operates within isoprenoid biosynthesis; isopentenyl diphosphate biosynthesis via DXP pathway; isopentenyl diphosphate from 1-deoxy-D-xylulose 5-phosphate: step 2/6. Functionally, catalyzes the formation of 4-diphosphocytidyl-2-C-methyl-D-erythritol from CTP and 2-C-methyl-D-erythritol 4-phosphate (MEP). The chain is 2-C-methyl-D-erythritol 4-phosphate cytidylyltransferase from Mycobacterium leprae (strain Br4923).